Consider the following 445-residue polypeptide: Reticulon-4 receptor-like 1 (445 aa).

A signal peptide spans Met-1 to Gly-24. Positions Cys-25–Glu-54 constitute an LRRNT domain. LRR repeat units lie at residues Asp-55–Pro-76, Ala-77–Gly-98, His-101–Gly-123, Lys-126–Gly-147, Ser-150–Asp-171, Asn-174–Gly-195, Asn-198–Asp-219, and Arg-222–Pro-243. An LRRCT domain is found at Asn-255 to Gly-306. Disordered stretches follow at residues Pro-307 to Glu-377 and Arg-401 to Ser-424. Basic residues-rich tracts occupy residues Gly-352–Arg-366 and Arg-401–Pro-413. Ser-424 carries the GPI-anchor amidated serine lipid modification. The helical transmembrane segment at Ser-424–Leu-444 threads the bilayer. Residues Ser-425–Arg-445 constitute a propeptide, removed in mature form.

This sequence belongs to the Nogo receptor family. In terms of assembly, identified in a complex that contains RTN4R, RTN4RL1 and NGFR; the interaction depends on the presence of chondroitin sulfate proteoglycans. Does not interact with MAG, OMG and RTN4. In terms of tissue distribution, detected in brain (at protein level). Detected in retina ganglion cell layer and inner nuclear layer.

The protein resides in the cell membrane. It localises to the membrane raft. Its subcellular location is the perikaryon. It is found in the cell projection. Its function is as follows. Cell surface receptor that plays a functionally redundant role in postnatal brain development and in regulating axon regeneration in the adult central nervous system. Contributes to normal axon migration across the brain midline and normal formation of the corpus callosum. Protects motoneurons against apoptosis; protection against apoptosis is probably mediated by MAG. Plays a role in inhibiting neurite outgrowth and axon regeneration via its binding to neuronal chondroitin sulfate proteoglycans. Binds heparin. Like other family members, plays a role in restricting the number dendritic spines and the number of synapses that are formed during brain development. Signaling mediates activation of Rho and downstream reorganization of the actin cytoskeleton. This is Reticulon-4 receptor-like 1 from Mus musculus (Mouse).